The primary structure comprises 246 residues: Protein crossbronx (246 aa).

A UBC core domain is found at 20 to 177; it reads QQEYKILAEY…VQESILESKA (158 aa).

It belongs to the ubiquitin-conjugating enzyme family. FTS subfamily.

In Drosophila grimshawi (Hawaiian fruit fly), this protein is Protein crossbronx (cbx).